The following is a 207-amino-acid chain: Small ribosomal subunit protein uS4 (207 aa).

Residues 33–54 (KLDSKPGQHGRTSGARTSDYGN) form a disordered region. Residues 42–53 (GRTSGARTSDYG) show a composition bias toward polar residues. Positions 97–160 (SRLDNVVYRM…KKQVRIAEAL (64 aa)) constitute an S4 RNA-binding domain.

This sequence belongs to the universal ribosomal protein uS4 family. As to quaternary structure, part of the 30S ribosomal subunit. Contacts protein S5. The interaction surface between S4 and S5 is involved in control of translational fidelity.

Functionally, one of the primary rRNA binding proteins, it binds directly to 16S rRNA where it nucleates assembly of the body of the 30S subunit. With S5 and S12 plays an important role in translational accuracy. The chain is Small ribosomal subunit protein uS4 from Cupriavidus pinatubonensis (strain JMP 134 / LMG 1197) (Cupriavidus necator (strain JMP 134)).